We begin with the raw amino-acid sequence, 254 residues long: Small ribosomal subunit protein uS2 (254 aa).

It belongs to the universal ribosomal protein uS2 family.

The chain is Small ribosomal subunit protein uS2 from Borrelia duttonii (strain Ly).